We begin with the raw amino-acid sequence, 269 residues long: Diphthine synthase (269 aa).

S-adenosyl-L-methionine-binding positions include L10, D87, V90, 115–116 (SI), L166, A209, and H234.

It belongs to the diphthine synthase family. Homodimer.

The catalysed reaction is 2-[(3S)-amino-3-carboxypropyl]-L-histidyl-[translation elongation factor 2] + 3 S-adenosyl-L-methionine = diphthine-[translation elongation factor 2] + 3 S-adenosyl-L-homocysteine + 3 H(+). The protein operates within protein modification; peptidyl-diphthamide biosynthesis. S-adenosyl-L-methionine-dependent methyltransferase that catalyzes the trimethylation of the amino group of the modified target histidine residue in translation elongation factor 2 (EF-2), to form an intermediate called diphthine. The three successive methylation reactions represent the second step of diphthamide biosynthesis. This is Diphthine synthase from Pyrococcus furiosus (strain ATCC 43587 / DSM 3638 / JCM 8422 / Vc1).